The sequence spans 159 residues: 2-C-methyl-D-erythritol 2,4-cyclodiphosphate synthase (159 aa).

Aspartate 10 and histidine 12 together coordinate a divalent metal cation. 4-CDP-2-C-methyl-D-erythritol 2-phosphate is bound by residues 10-12 (DVH) and 37-38 (HS). Histidine 45 contributes to the a divalent metal cation binding site. 4-CDP-2-C-methyl-D-erythritol 2-phosphate is bound by residues 59 to 61 (DIG), 64 to 68 (FPDTD), 103 to 109 (AQAPKML), 135 to 138 (TTTE), phenylalanine 142, and arginine 145.

This sequence belongs to the IspF family. As to quaternary structure, homotrimer. Requires a divalent metal cation as cofactor.

It carries out the reaction 4-CDP-2-C-methyl-D-erythritol 2-phosphate = 2-C-methyl-D-erythritol 2,4-cyclic diphosphate + CMP. It functions in the pathway isoprenoid biosynthesis; isopentenyl diphosphate biosynthesis via DXP pathway; isopentenyl diphosphate from 1-deoxy-D-xylulose 5-phosphate: step 4/6. Functionally, involved in the biosynthesis of isopentenyl diphosphate (IPP) and dimethylallyl diphosphate (DMAPP), two major building blocks of isoprenoid compounds. Catalyzes the conversion of 4-diphosphocytidyl-2-C-methyl-D-erythritol 2-phosphate (CDP-ME2P) to 2-C-methyl-D-erythritol 2,4-cyclodiphosphate (ME-CPP) with a corresponding release of cytidine 5-monophosphate (CMP). The polypeptide is 2-C-methyl-D-erythritol 2,4-cyclodiphosphate synthase (Francisella tularensis subsp. novicida (strain U112)).